The primary structure comprises 917 residues: Coiled-coil domain-containing protein 186 (917 aa).

Disordered stretches follow at residues 1-52, 97-118, and 701-769; these read MKIR…SGDE, SCANTDTCPEDSGQIDDFPGGD, and TQRR…SVAV. Basic and acidic residues predominate over residues 33–44; the sequence is TTEKTSELRDDS. The stretch at 220–736 forms a coiled coil; sequence RYLQQELTVK…TENGNHDKDI (517 aa). Basic and acidic residues predominate over residues 722–736; that stretch reads RKLEQTENGNHDKDI. Positions 737 to 748 are enriched in low complexity; it reads SSMGSRSSSSGS. At S759 the chain carries Phosphoserine. Coiled-coil stretches lie at residues 778 to 822 and 874 to 913; these read AMLI…IQSY and KLQAVLEDTLLKNITLKENLQTLGTEIERLIKHQHELEQR.

Expressed in postnatal germ cells.

The polypeptide is Coiled-coil domain-containing protein 186 (Ccdc186) (Mus musculus (Mouse)).